The chain runs to 352 residues: D-arabitol-phosphate dehydrogenase (352 aa).

C43, H65, C96, C99, C102, C110, and E151 together coordinate Mn(2+).

Belongs to the zinc-containing alcohol dehydrogenase family. In terms of assembly, homotetramer. It depends on Mn(2+) as a cofactor.

The enzyme catalyses D-arabinitol 1-phosphate + NAD(+) = D-xylulose 5-phosphate + NADH + H(+). Its activity is regulated as follows. Inhibited by EDTA, 4-hydroxymercuribenzoic acid (PHMB), mercury and zinc ions at a concentration of 2 mM. Its function is as follows. Involved in the arabitol catabolism via the arabitol phosphate route. Catalyzes only the transformation of D-arabitol 1-phosphate (Arb1P) and D-arabitol 5-phosphate (Arb5P) into D-xylulose 5-phosphate (Xlu5P) and ribulose 5-phosphate, respectively. It can use both NAD and NADP. This is D-arabitol-phosphate dehydrogenase from Enterococcus avium (Streptococcus avium).